The chain runs to 190 residues: MTEIVKVREQLQISLSDFQEQASLQSGQIFVVGCSTSEVLGERIGTSGTMEVAEAIFSELKQFQEQTGIELAFQCCEHLNRALVVERELAMKYQFEIVTVTPVRSAGGALATYAYHNLKDPVVIEFIKADAGMDIGDTFIGMHLKHVAVPVRTSVKEIGSAHVTMATTRGKLIGGARAVYAAKEETITCR.

Belongs to the UPF0340 family.

The sequence is that of UPF0340 protein BT9727_4999 from Bacillus thuringiensis subsp. konkukian (strain 97-27).